The primary structure comprises 386 residues: Acetylornithine aminotransferase (386 aa).

Pyridoxal 5'-phosphate-binding positions include 96–97 and Phe123; that span reads GA. Arg126 lines the N(2)-acetyl-L-ornithine pocket. A pyridoxal 5'-phosphate-binding site is contributed by 208–211; it reads DEVQ. Lys237 is modified (N6-(pyridoxal phosphate)lysine). Position 265 (Ser265) interacts with N(2)-acetyl-L-ornithine. Thr266 is a pyridoxal 5'-phosphate binding site.

Belongs to the class-III pyridoxal-phosphate-dependent aminotransferase family. ArgD subfamily. Homodimer. Pyridoxal 5'-phosphate is required as a cofactor.

It localises to the cytoplasm. It catalyses the reaction N(2)-acetyl-L-ornithine + 2-oxoglutarate = N-acetyl-L-glutamate 5-semialdehyde + L-glutamate. Its pathway is amino-acid biosynthesis; L-arginine biosynthesis; N(2)-acetyl-L-ornithine from L-glutamate: step 4/4. This Bacillus cereus (strain ATCC 14579 / DSM 31 / CCUG 7414 / JCM 2152 / NBRC 15305 / NCIMB 9373 / NCTC 2599 / NRRL B-3711) protein is Acetylornithine aminotransferase.